The following is a 366-amino-acid chain: MKVGVHKLAMSAPGDVSELAALIETGAVNPREIVALVGKTEGNGGANDFTRGLATLSYQLLLARHLGLSPEEVGQRIAFVWSGGTEGVLSPHATLFTRAPDDGPMPAEPRLALGIGITRDIAPEEVGTTAMVEAVAGAVHTALAEAGITEPADVHYVQVKGPLLTPATIADADRRGARLVTRDPNGSKPYARGAMALGVALGLGEVAAERITPDMIACDMEVFSAVASTSAGGELTKCEVLLFGNAPGATSAFRIGHGVLKDAIDVAGVKEALRSAGLSFHGTPSEEQAHEIVAVFAKAEAPVNGRLRGRRTTMLSDADIHYERHARAAVGAVIASVTGDPAIFVSGGTEHQCAPGAAPIAAIVRA.

The segment at 1-103 is RU A; it reads MKVGVHKLAM…TLFTRAPDDG (103 aa). Residues Arg51 and 82–83 each bind substrate; that span reads SG. Residues 110 to 247 are RU B; that stretch reads RLALGIGITR…CEVLLFGNAP (138 aa). The active site involves Lys160. Substrate is bound by residues Arg192, 230–231, Arg327, and 346–347; these read SA and SG. Ser230 functions as the Nucleophile in the catalytic mechanism. The tract at residues 253–366 is RU C; the sequence is FRIGHGVLKD…AAPIAAIVRA (114 aa).

The protein belongs to the cyclic amide hydrolase (CyAH) family. In terms of assembly, homotetramer.

In terms of biological role, cyclic amide hydrolase of unknown substrate specificity. Catalyzes the hydrolytic ring-opening of a cyclic amide. Does not act on cyanuric acid nor barbituric acid. This chain is Cyclic amide hydrolase, found in Azorhizobium caulinodans (strain ATCC 43989 / DSM 5975 / JCM 20966 / LMG 6465 / NBRC 14845 / NCIMB 13405 / ORS 571).